Reading from the N-terminus, the 358-residue chain is Heme A synthase (358 aa).

Helical transmembrane passes span 22 to 42, 107 to 127, 133 to 153, 172 to 192, 208 to 228, 269 to 289, 302 to 322, and 324 to 344; these read IQVW…VGGA, VLGR…WVTK, IFLQ…IGWW, LAIH…LSRG, FAGW…LVAG, FVHR…ALYV, AIFL…TLLH, and VPIS…CFSV. Residue H271 participates in heme binding. H332 contributes to the heme binding site.

It belongs to the COX15/CtaA family. Type 2 subfamily. In terms of assembly, interacts with CtaB. Heme b is required as a cofactor.

The protein localises to the cell membrane. The catalysed reaction is Fe(II)-heme o + 2 A + H2O = Fe(II)-heme a + 2 AH2. Its pathway is porphyrin-containing compound metabolism; heme A biosynthesis; heme A from heme O: step 1/1. Functionally, catalyzes the conversion of heme O to heme A by two successive hydroxylations of the methyl group at C8. The first hydroxylation forms heme I, the second hydroxylation results in an unstable dihydroxymethyl group, which spontaneously dehydrates, resulting in the formyl group of heme A. The polypeptide is Heme A synthase (Bartonella bacilliformis (strain ATCC 35685 / KC583 / Herrer 020/F12,63)).